A 381-amino-acid polypeptide reads, in one-letter code: F-box/LRR-repeat protein At4g14103 (381 aa).

The F-box domain occupies R7–P60. 6 LRR repeats span residues D118–F146, H171–D196, S218–D243, Y249–Y274, T299–S330, and N331–G356.

The protein is F-box/LRR-repeat protein At4g14103 of Arabidopsis thaliana (Mouse-ear cress).